A 97-amino-acid polypeptide reads, in one-letter code: uncharacterized protein (97 aa).

The protein belongs to the mycobacterial PE family.

Its function is as follows. Part of the ESX-1 / type VII specialized secretion system (T7SS), which exports several proteins including EsxA and EsxB. Plays a role in DNA conjugation, in at least a donor strain. This is an uncharacterized protein from Mycolicibacterium smegmatis (strain ATCC 700084 / mc(2)155) (Mycobacterium smegmatis).